The primary structure comprises 299 residues: Putative syntaxin-2 (299 aa).

Residues Met1–Ala270 are Cytoplasmic-facing. Residues Glu112–Ser146 adopt a coiled-coil conformation. A t-SNARE coiled-coil homology domain is found at Tyr193–Ala255. Residues Ala271–Leu291 form a helical; Anchor for type IV membrane protein membrane-spanning segment. Over Ser292 to Lys299 the chain is Extracellular.

This sequence belongs to the syntaxin family.

It localises to the membrane. In terms of biological role, potentially involved in docking of synaptic vesicles at presynaptic active zones. This is Putative syntaxin-2 (syx-2) from Caenorhabditis elegans.